A 173-amino-acid chain; its full sequence is NADH-ubiquinone oxidoreductase chain 6 (173 aa).

5 consecutive transmembrane segments (helical) span residues 1-21 (MTYF…AVAS), 27-47 (YGVV…LSLG), 48-68 (VSFV…VVFV), 87-107 (VVGY…VGGF), and 139-159 (CGVG…FVVL).

It belongs to the complex I subunit 6 family.

The protein resides in the mitochondrion membrane. The catalysed reaction is a ubiquinone + NADH + 5 H(+)(in) = a ubiquinol + NAD(+) + 4 H(+)(out). Its function is as follows. Core subunit of the mitochondrial membrane respiratory chain NADH dehydrogenase (Complex I) that is believed to belong to the minimal assembly required for catalysis. Complex I functions in the transfer of electrons from NADH to the respiratory chain. The immediate electron acceptor for the enzyme is believed to be ubiquinone. This is NADH-ubiquinone oxidoreductase chain 6 (MT-ND6) from Ptychoramphus aleuticus (Cassin's auklet).